The primary structure comprises 138 residues: Cellular retinoic acid-binding protein 2 (138 aa).

The Nuclear localization signal motif lies at 21 to 31; that stretch reads KVLGVNVMLRK. K102 is covalently cross-linked (Glycyl lysine isopeptide (Lys-Gly) (interchain with G-Cter in SUMO)). 133 to 135 is an all-trans-retinoate binding site; it reads RVY.

Belongs to the calycin superfamily. Fatty-acid binding protein (FABP) family. As to quaternary structure, interacts with RXR and RARA. Interacts with importin alpha. In terms of processing, sumoylated in response to retinoic acid binding, sumoylation is critical for dissociation from ER and subsequent nuclear translocation.

Its subcellular location is the cytoplasm. It localises to the endoplasmic reticulum. The protein localises to the nucleus. Transports retinoic acid to the nucleus. Regulates the access of retinoic acid to the nuclear retinoic acid receptors. The sequence is that of Cellular retinoic acid-binding protein 2 (CRABP2) from Homo sapiens (Human).